Here is a 629-residue protein sequence, read N- to C-terminus: MFYPDPFDVIIIGGGHAGTEAAMAAARMGQQTLLLTHNIDTLGQMSCNPAIGGIGKGHLVKEVDALGGLMAKAIDQAGIQFRILNASKGPAVRATRAQADRVLYKQAVRTALENQPNLMIFQQAVDDLIVENDRVVGAVTQMGLKFRAKAVVLTVGTFLDGKIHIGLDNYSGGRAGDPPSVPLARRLRELPLRVSRLKTGTPPRIDARTIDFSVLDQQHGDNPMPVFSFMGSADQHPRQVPCYVTHTNEKTHDVIRNNLDRSPMYAGVIEGIGPRYCPSIEDKVMRFADRNAHQIFLEPEGLTSNEIYPNGISTSLPFDVQMQIVRSMKGMENAKIVRPGYAIEYDFFDPRDLKPTLESKYIHGLFFAGQINGTTGYEEAAAQGLLAGLNAGRYSAEKEGWAPGRSQAYLGVLVDDLCTLGTKEPYRMFTSRAEYRLMLREDNADLRLTEVGREMGLVDDARWARFNEKLENIERERQRLRSTWVTPSTASVEEINTMLTAPLSREASGEDLLRRPEMTYAQLTSLSAFAPALDDAQAAEQVEIQVKYEGYIARQQDEIEKQQRNENTLLPATLDYRQVNGLSNEVIAKLNDHKPASIGQASRISGITPAAISILLVWLKKQGLLRRSA.

Residues 13-18 (GGGHAG), Val125, and Ser180 each bind FAD. Position 273–287 (273–287 (GPRYCPSIEDKVMRF)) interacts with NAD(+). Gln370 lines the FAD pocket.

It belongs to the MnmG family. In terms of assembly, homodimer. Heterotetramer of two MnmE and two MnmG subunits. The cofactor is FAD.

The protein resides in the cytoplasm. In terms of biological role, NAD-binding protein involved in the addition of a carboxymethylaminomethyl (cmnm) group at the wobble position (U34) of certain tRNAs, forming tRNA-cmnm(5)s(2)U34. The protein is tRNA uridine 5-carboxymethylaminomethyl modification enzyme MnmG of Cronobacter sakazakii (strain ATCC BAA-894) (Enterobacter sakazakii).